The chain runs to 572 residues: Proline--tRNA ligase (572 aa).

It belongs to the class-II aminoacyl-tRNA synthetase family. ProS type 1 subfamily. In terms of assembly, homodimer.

Its subcellular location is the cytoplasm. It catalyses the reaction tRNA(Pro) + L-proline + ATP = L-prolyl-tRNA(Pro) + AMP + diphosphate. Its function is as follows. Catalyzes the attachment of proline to tRNA(Pro) in a two-step reaction: proline is first activated by ATP to form Pro-AMP and then transferred to the acceptor end of tRNA(Pro). As ProRS can inadvertently accommodate and process non-cognate amino acids such as alanine and cysteine, to avoid such errors it has two additional distinct editing activities against alanine. One activity is designated as 'pretransfer' editing and involves the tRNA(Pro)-independent hydrolysis of activated Ala-AMP. The other activity is designated 'posttransfer' editing and involves deacylation of mischarged Ala-tRNA(Pro). The misacylated Cys-tRNA(Pro) is not edited by ProRS. The protein is Proline--tRNA ligase of Edwardsiella ictaluri (strain 93-146).